The chain runs to 453 residues: MPLPIVAILGRPNVGKSTLVNRLAGSREAIVHDEPGVTRDRTYQEAFWCDRDFTVVDTGGLVFDDDTEFLPLIREQAELALAEAALAVLVVDGQAGLTAADNEIADWLRHQNRPIVVAVNKCESPDKGAAQAAEFWSLGFGEPLPISSIHGSGTGELLDRVLELLPPADEAAGDETEIGVAIVGRPNVGKSSLLNSFLGEQRAIVSPIAGTTRDAIDTVIERNDQRYRLVDTAGIRRKRGVDYGPEFFGINRSFKAIRRADVCLLVIDVLDGVTDQDQKLAGRIEEDGRACVIVVNKWDAHEKDSSTIYEVERQLRDRLYFLDWAPMIFVSALTGQRVEKILDQVNTVVEQHRRRVGTSVINEVLGDAIAWRTPPTTRQGRQGRIYYGTQVTTQPPSFTLFVNDPKLFGESYRRYIERQFRESLGFSGTPIRLFWRGKKSRELERGANRATRV.

2 consecutive EngA-type G domains span residues 4–169 (PIVA…PPAD) and 178–353 (IGVA…EQHR). Residues 10–17 (GRPNVGKS), 57–61 (DTGGL), 120–123 (NKCE), 184–191 (GRPNVGKS), 231–235 (DTAGI), and 296–299 (NKWD) contribute to the GTP site. Residues 354–439 (RRVGTSVINE…PIRLFWRGKK (86 aa)) enclose the KH-like domain.

It belongs to the TRAFAC class TrmE-Era-EngA-EngB-Septin-like GTPase superfamily. EngA (Der) GTPase family. In terms of assembly, associates with the 50S ribosomal subunit.

Functionally, GTPase that plays an essential role in the late steps of ribosome biogenesis. This Synechococcus sp. (strain ATCC 27144 / PCC 6301 / SAUG 1402/1) (Anacystis nidulans) protein is GTPase Der.